Here is a 282-residue protein sequence, read N- to C-terminus: Shikimate dehydrogenase (NADP(+)) (282 aa).

Residues Ser16 to Ser18 and Thr63 contribute to the shikimate site. Catalysis depends on Lys67, which acts as the Proton acceptor. Shikimate is bound by residues Asn88 and Asp103. Residues Gly128 to Ala132 and Gly243 each bind NADP(+).

This sequence belongs to the shikimate dehydrogenase family. Homodimer.

The enzyme catalyses shikimate + NADP(+) = 3-dehydroshikimate + NADPH + H(+). Its pathway is metabolic intermediate biosynthesis; chorismate biosynthesis; chorismate from D-erythrose 4-phosphate and phosphoenolpyruvate: step 4/7. In terms of biological role, involved in the biosynthesis of the chorismate, which leads to the biosynthesis of aromatic amino acids. Catalyzes the reversible NADPH linked reduction of 3-dehydroshikimate (DHSA) to yield shikimate (SA). This Xylella fastidiosa (strain 9a5c) protein is Shikimate dehydrogenase (NADP(+)).